The sequence spans 86 residues: Large ribosomal subunit protein bL31B (86 aa).

The protein belongs to the bacterial ribosomal protein bL31 family. Type B subfamily. Part of the 50S ribosomal subunit.

This Salmonella agona (strain SL483) protein is Large ribosomal subunit protein bL31B.